We begin with the raw amino-acid sequence, 211 residues long: Ribosomal RNA large subunit methyltransferase E (211 aa).

Residues Gly-60, Trp-62, Asp-80, Asp-96, and Asp-121 each contribute to the S-adenosyl-L-methionine site. Lys-161 (proton acceptor) is an active-site residue.

It belongs to the class I-like SAM-binding methyltransferase superfamily. RNA methyltransferase RlmE family.

Its subcellular location is the cytoplasm. It catalyses the reaction uridine(2552) in 23S rRNA + S-adenosyl-L-methionine = 2'-O-methyluridine(2552) in 23S rRNA + S-adenosyl-L-homocysteine + H(+). Functionally, specifically methylates the uridine in position 2552 of 23S rRNA at the 2'-O position of the ribose in the fully assembled 50S ribosomal subunit. This chain is Ribosomal RNA large subunit methyltransferase E, found in Cellvibrio japonicus (strain Ueda107) (Pseudomonas fluorescens subsp. cellulosa).